A 199-amino-acid chain; its full sequence is Thymidine kinase (199 aa).

Residues 15-22 and 88-91 contribute to the ATP site; these read GSMFSGKS and DEVQ. The Proton acceptor role is filled by Glu89. Cys145, Cys148, Cys183, and His186 together coordinate Zn(2+).

It belongs to the thymidine kinase family. Homotetramer.

It localises to the cytoplasm. The enzyme catalyses thymidine + ATP = dTMP + ADP + H(+). The sequence is that of Thymidine kinase from Staphylococcus saprophyticus subsp. saprophyticus (strain ATCC 15305 / DSM 20229 / NCIMB 8711 / NCTC 7292 / S-41).